The sequence spans 401 residues: Patatin-like protein 4 (401 aa).

One can recognise a PNPLA domain in the interval 17 to 218 (LSLDGGGVRG…TANDPTLVGM (202 aa)). Positions 21-26 (GGGVRG) match the GXGXXG motif. The short motif at 60–64 (GTSTG) is the GXSXG element. Serine 62 functions as the Nucleophile in the catalytic mechanism. The active-site Proton acceptor is the aspartate 205. The short motif at 205–207 (DGG) is the DGA/G element.

This sequence belongs to the patatin family.

Its function is as follows. Possesses non-specific lipolytic acyl hydrolase (LAH) activity. Hydrolyzes phospholipids as well as galactolipids. May play a role in disease resistance. This chain is Patatin-like protein 4 (PLP4), found in Arabidopsis thaliana (Mouse-ear cress).